The following is a 201-amino-acid chain: MELAIKDASGGLEVSEATFGREFNEALVHQVVVAYAAGARQGTRAQKTRSEVSGGGKKPWAQKGTGRARAGTIRSPIWRSGGVSFAAKPQDHSQKVNRKMYRGAIKSILSELVRQERLIVVESFALAAPKTKELVAKLKELELKDVLIVTEEVDENLFLSARNLYKVDTRDVAGIDPVSLIAFDKVLITAAAVKQLEEALA.

The interval 43-71 (TRAQKTRSEVSGGGKKPWAQKGTGRARAG) is disordered.

This sequence belongs to the universal ribosomal protein uL4 family. Part of the 50S ribosomal subunit.

In terms of biological role, one of the primary rRNA binding proteins, this protein initially binds near the 5'-end of the 23S rRNA. It is important during the early stages of 50S assembly. It makes multiple contacts with different domains of the 23S rRNA in the assembled 50S subunit and ribosome. Functionally, forms part of the polypeptide exit tunnel. The polypeptide is Large ribosomal subunit protein uL4 (Pseudoalteromonas translucida (strain TAC 125)).